The sequence spans 436 residues: Bifunctional protein GlmU (436 aa).

The pyrophosphorylase stretch occupies residues 1–225; sequence MNNNTSIIIL…EQNFMGINDK (225 aa). UDP-N-acetyl-alpha-D-glucosamine-binding positions include 10–13, K24, Q76, and 83–84; these read LAAG and GT. Position 104 (D104) interacts with Mg(2+). Positions 137, 151, 166, and 223 each coordinate UDP-N-acetyl-alpha-D-glucosamine. Residue N223 participates in Mg(2+) binding. Residues 226–246 form a linker region; sequence FQLSIAEKIMQDEIKQNLMKA. Residues 247–436 are N-acetyltransferase; it reads GVLMRMPESI…KFFGKDDVKK (190 aa). UDP-N-acetyl-alpha-D-glucosamine contacts are provided by R310 and K327. Residue H338 is the Proton acceptor of the active site. Residues Y341 and N352 each contribute to the UDP-N-acetyl-alpha-D-glucosamine site. Residues 361–362, S380, A398, and R415 each bind acetyl-CoA; that span reads NY.

The protein in the N-terminal section; belongs to the N-acetylglucosamine-1-phosphate uridyltransferase family. This sequence in the C-terminal section; belongs to the transferase hexapeptide repeat family. As to quaternary structure, homotrimer. Requires Mg(2+) as cofactor.

It is found in the cytoplasm. It carries out the reaction alpha-D-glucosamine 1-phosphate + acetyl-CoA = N-acetyl-alpha-D-glucosamine 1-phosphate + CoA + H(+). It catalyses the reaction N-acetyl-alpha-D-glucosamine 1-phosphate + UTP + H(+) = UDP-N-acetyl-alpha-D-glucosamine + diphosphate. Its pathway is nucleotide-sugar biosynthesis; UDP-N-acetyl-alpha-D-glucosamine biosynthesis; N-acetyl-alpha-D-glucosamine 1-phosphate from alpha-D-glucosamine 6-phosphate (route II): step 2/2. It functions in the pathway nucleotide-sugar biosynthesis; UDP-N-acetyl-alpha-D-glucosamine biosynthesis; UDP-N-acetyl-alpha-D-glucosamine from N-acetyl-alpha-D-glucosamine 1-phosphate: step 1/1. It participates in bacterial outer membrane biogenesis; LPS lipid A biosynthesis. Catalyzes the last two sequential reactions in the de novo biosynthetic pathway for UDP-N-acetylglucosamine (UDP-GlcNAc). The C-terminal domain catalyzes the transfer of acetyl group from acetyl coenzyme A to glucosamine-1-phosphate (GlcN-1-P) to produce N-acetylglucosamine-1-phosphate (GlcNAc-1-P), which is converted into UDP-GlcNAc by the transfer of uridine 5-monophosphate (from uridine 5-triphosphate), a reaction catalyzed by the N-terminal domain. This is Bifunctional protein GlmU from Campylobacter concisus (strain 13826).